The chain runs to 859 residues: MSAYIAMKGVITNVDENIRNDEDVAFEYEIQKTPQNILTWKRYIEYWKEEGRTDKQIRWLYERFCSQFVTDTSIWEDYIRWESTKEVVETSRIFWLFQRCLKSCVRDCDRICLSYLELAIEQYDLAMIRHALASSLMKMEREMHRKVWDPVIKFVEEKVLPLTQLDSTQEDEEESTDEAELINVLLVKGFTKGGFISEEISENGSRGDIWSSHILERYLKVAPQQKRNESLATLALTRDNITIKSVYEKYLPQDENSGKYLPSSELPFELNFNYLASLEKLGLDNQYEEFMRQMNGIYPDKWLFLILSLAKYYISRGRLDSCGDLLKKSLQQTLRYSDFDRIYNFYLLFEQECSQFILGKLKENDSKFFNQKDWTEKLQAHMATFESLINLYDIYLNDVALRQDSNLVETWMKRVSLQKSAAEKCNVYSEAILKIDPRKVGTPGSFGRLWCSYGDLYWRSNAISTARELWTQSLKVPYPYIEDLEEIYLNWADRELDKEGVERAFSILEDALHVPTNPEILLEKYKNGHRKIPAQTVLFNSLRIWSKYIDYLEAYCPKDANSSDKIFNKTKMAYNTVIDLRLITPAMAENFALFLQNHYEVMESFQVYEKTIPLFPPEIQYELWIEYLEVATSHQLSSLSPEHIRFLFEKALKNLCSNGIDCKTIFIAYSVFEERISGLISKSIEILRRGAVIGTVSVSTHLESRLQLWRMCISKAESTLGPSVTRELYQECIQILPNSKAVEFVIKFSDFESSIGETIRAREILAYGAKLLPPSRNTELWDSFEIFELKHGDKETYKDMLKMKKVLESNMLIDSASVSHEEGNINFVAAATSHAPNSHTLTQSTSSYSINPDEIELDI.

14 HAT repeats span residues 17–49 (NIRN…YWKE), 52–84 (RTDK…WEST), 88–108 (VETS…VRDC), 123–157 (YDLA…FVEE), 177–219 (DEAE…ERYL), 238–271 (RDNI…FELN), 427–459 (VYSE…LYWR), 461–482 (NAIS…PYIE), 520–554 (ILLE…YLEA), 599–633 (YEVM…VATS), 639–675 (LSPE…FEER), 685–718 (EILR…KAES), 720–754 (LGPS…FESS), and 756–790 (GETI…FELK).

It belongs to the crooked-neck family. Belongs to the NTC complex (or PRP19-associated complex), composed of at least CEF1, CLF1, ISY1, NTC20, SNT309, SYF1, SYF2, and PRP19. The NTC complex associates with the spliceosome after the release of the U1 and U4 snRNAs and forms the CWC spliceosome subcomplex (or CEF1-associated complex) reminiscent of a late-stage spliceosome composed also of the U2, U5 and U6 snRNAs and at least BUD13, BUD31, BRR2, CDC40, CUS1, CWC2, CWC15, CWC21, CWC22, CWC23, CWC24, CWC25, CWC27, ECM2, HSH155, IST3, LEA1, MSL1, PRP8, PRP9, PRP11, PRP21, PRP22, PRP45, PRP46, SLU7, SMB1, SMD1, SMD2, SMD3, SMX2, SMX3, SNU114, SPP2, RSE1 and YJU2. Interacts with CEF1, CLF1, ISY1, NTC20, PRP22, PRP46 and SYF2.

The protein localises to the nucleus. Its function is as follows. Involved in pre-mRNA splicing and cell cycle control. As a component of the NTC complex (or PRP19-associated complex), associates to the spliceosome to mediate conformational rearrangement or to stabilize the structure of the spliceosome after U4 snRNA dissociation, which leads to spliceosome maturation. This is Pre-mRNA-splicing factor SYF1 (SYF1) from Saccharomyces cerevisiae (strain ATCC 204508 / S288c) (Baker's yeast).